We begin with the raw amino-acid sequence, 120 residues long: MLFRSAFVLLIVAFASACLVQHVQAKQIPVRRSLSTDASMSSAAGKLNRRWWFGFTGSLGKEPDNGQVQIKIIPDALIIKNPPANKDDLNKLIENLKRKHPRFKTVVMPTDPNGDVVIWE.

The first 25 residues, 1–25, serve as a signal peptide directing secretion; the sequence is MLFRSAFVLLIVAFASACLVQHVQA. The segment at 46-59 is PID14 protease inhibitor domain; it reads KLNRRWWFGFTGSL.

In terms of assembly, interacts with host cysteine proteases CP1A, CP1B, XCP2 and CP2. Cleaved by host target papain-like cysteine proteases (PLCPs) to release the embedded inhibitor peptide PID14.

It is found in the secreted. Secreted effector required for virulence. Functions as an inhibitor of a set of apoplastic maize papain-like cysteine proteases (PLCPs) including CP1A, CP1B, XCP2 and CP2, whose activity is directly linked with salicylic-acid-associated plant defenses. Acts as a substrate mimicking molecule for apoplastic PLCPs and its processing releases the embedded inhibitor peptide PID14, which in turn blocks PLCPs to modulate host immunity. The protein is Secreted effector PIT2 of Mycosarcoma maydis (Corn smut fungus).